Reading from the N-terminus, the 78-residue chain is DNA-directed RNA polymerase subunit omega (78 aa).

This sequence belongs to the RNA polymerase subunit omega family. In cyanobacteria the RNAP catalytic core is composed of 2 alpha, 1 beta, 1 beta', 1 gamma and 1 omega subunit. When a sigma factor is associated with the core the holoenzyme is formed, which can initiate transcription.

It carries out the reaction RNA(n) + a ribonucleoside 5'-triphosphate = RNA(n+1) + diphosphate. Functionally, promotes RNA polymerase assembly. Latches the N- and C-terminal regions of the beta' subunit thereby facilitating its interaction with the beta and alpha subunits. This is DNA-directed RNA polymerase subunit omega from Trichormus variabilis (strain ATCC 29413 / PCC 7937) (Anabaena variabilis).